Reading from the N-terminus, the 379-residue chain is MKNQFLNSYFQLITTIFLISSITIAAEEITSTLKVPNGFKVEIFLNNTIEKPRGITSDQDGNIFIGSGSTFAYFVTKNRKIYTIAKTLQKPIGIDYWDNKLYISSVDKIYVVKNVKEEINKSIKSHKDYTWKMQIFALLPKNNSQMHSGRYIKVDSKNNKLIVNIGSQHNVKIPPKKEAVILSINLKTKKEEIVAFGVRNSVGFDFHPISNEIYFSDNGQDGLGDNIPPDEINVITEYKEHFGFPYVFGKNQKNYGFYNKAPKNTKFIPSIYELPAHVAPLGIHFYRGNNFPKEYINKLFIAEHGSWNRSSPVGYKITTLDIDSKTRTARNYKTFLYGFLKHDKSKFGRPVDIITYYDGSILFTDDFGNKIYRVYYEKI.

Residues 9–26 traverse the membrane as a helical segment; sequence YFQLITTIFLISSITIAA.

To A.liquefaciens L-sorbosone dehydrogenase.

Its subcellular location is the membrane. This is an uncharacterized protein from Borreliella burgdorferi (strain ATCC 35210 / DSM 4680 / CIP 102532 / B31) (Borrelia burgdorferi).